The following is a 269-amino-acid chain: Energy-coupling factor transporter ATP-binding protein EcfA1 (269 aa).

Positions 8 to 242 constitute an ABC transporter domain; that stretch reads ITFNHVRFKY…GDGLTEIGLD (235 aa). Residue 42 to 49 coordinates ATP; sequence GHNGSGKS.

This sequence belongs to the ABC transporter superfamily. Energy-coupling factor EcfA family. Forms a stable energy-coupling factor (ECF) transporter complex composed of 2 membrane-embedded substrate-binding proteins (S component), 2 ATP-binding proteins (A component) and 2 transmembrane proteins (T component).

The protein resides in the cell membrane. Functionally, ATP-binding (A) component of a common energy-coupling factor (ECF) ABC-transporter complex. Unlike classic ABC transporters this ECF transporter provides the energy necessary to transport a number of different substrates. The protein is Energy-coupling factor transporter ATP-binding protein EcfA1 of Staphylococcus saprophyticus subsp. saprophyticus (strain ATCC 15305 / DSM 20229 / NCIMB 8711 / NCTC 7292 / S-41).